Here is a 62-residue protein sequence, read N- to C-terminus: DNA-binding protein 7 (62 aa).

This sequence belongs to the 7 kDa DNA-binding/endoribonuclease P2 family. Monomer.

The protein resides in the cytoplasm. In terms of biological role, can constrain negative DNA supercoils. May be involved in maintaining the integrity of the genome at high temperature. In Metallosphaera sedula (strain ATCC 51363 / DSM 5348 / JCM 9185 / NBRC 15509 / TH2), this protein is DNA-binding protein 7.